The sequence spans 100 residues: Aspartyl/glutamyl-tRNA(Asn/Gln) amidotransferase subunit C (100 aa).

Belongs to the GatC family. Heterotrimer of A, B and C subunits.

The enzyme catalyses L-glutamyl-tRNA(Gln) + L-glutamine + ATP + H2O = L-glutaminyl-tRNA(Gln) + L-glutamate + ADP + phosphate + H(+). The catalysed reaction is L-aspartyl-tRNA(Asn) + L-glutamine + ATP + H2O = L-asparaginyl-tRNA(Asn) + L-glutamate + ADP + phosphate + 2 H(+). Allows the formation of correctly charged Asn-tRNA(Asn) or Gln-tRNA(Gln) through the transamidation of misacylated Asp-tRNA(Asn) or Glu-tRNA(Gln) in organisms which lack either or both of asparaginyl-tRNA or glutaminyl-tRNA synthetases. The reaction takes place in the presence of glutamine and ATP through an activated phospho-Asp-tRNA(Asn) or phospho-Glu-tRNA(Gln). This is Aspartyl/glutamyl-tRNA(Asn/Gln) amidotransferase subunit C from Rickettsia peacockii (strain Rustic).